The primary structure comprises 417 residues: CinA-like protein (417 aa).

This sequence belongs to the CinA family.

The chain is CinA-like protein from Synechococcus sp. (strain RCC307).